Here is a 211-residue protein sequence, read N- to C-terminus: Probable nicotinate-nucleotide adenylyltransferase (211 aa).

This sequence belongs to the NadD family.

The enzyme catalyses nicotinate beta-D-ribonucleotide + ATP + H(+) = deamido-NAD(+) + diphosphate. It functions in the pathway cofactor biosynthesis; NAD(+) biosynthesis; deamido-NAD(+) from nicotinate D-ribonucleotide: step 1/1. Its function is as follows. Catalyzes the reversible adenylation of nicotinate mononucleotide (NaMN) to nicotinic acid adenine dinucleotide (NaAD). This is Probable nicotinate-nucleotide adenylyltransferase from Legionella pneumophila (strain Paris).